Here is a 225-residue protein sequence, read N- to C-terminus: MLYSSLPVCFLVLGAALCAPERMQNEAEPHDLQPHEAEPHSDHVAPLAKRSPHYDFGLGKRAYSYVSEYKRLPVYNFGLGKRSRPYSFGLGKRSVDEDQSNDEQQLTTSDLDQAALAELFDQYDDAEKRARPYSFGLGKRFADDETSEEKRARAYDFGLGKRLPMYNFGLGKRARSYNFGLGKRYSKFNFGLGKRERDMHRFSFGLGKRSGDDVSADDSDNYFDV.

Positions 1 to 18 (MLYSSLPVCFLVLGAALC) are cleaved as a signal peptide. Positions 19–48 (APERMQNEAEPHDLQPHEAEPHSDHVAPLA) are excised as a propeptide. Residues Leu58, Leu79, and Leu90 each carry the leucine amide modification. A propeptide spanning residues 94 to 127 (SVDEDQSNDEQQLTTSDLDQAALAELFDQYDDAE) is cleaved from the precursor. The residue at position 137 (Leu137) is a Leucine amide. The propeptide occupies 141–149 (FADDETSEE). Leu159, Leu170, Leu181, Leu192, and Leu206 each carry leucine amide. The interval 205–225 (GLGKRSGDDVSADDSDNYFDV) is disordered. Residues 210-225 (SGDDVSADDSDNYFDV) constitute a propeptide that is removed on maturation. The segment covering 214–225 (VSADDSDNYFDV) has biased composition (acidic residues).

It belongs to the allatostatin family. Highly expressed in the CNS and gut of larvae. Also expressed in the cells of the larval brain and ventral nerve cord and in endocrine cells of the midgut.

It localises to the secreted. Functionally, may act as a neurotransmitter or neuromodulator. The polypeptide is Helicostatins (Helicoverpa armigera (Cotton bollworm)).